The sequence spans 127 residues: Small ribosomal subunit protein uS11 (127 aa).

Belongs to the universal ribosomal protein uS11 family. In terms of assembly, part of the 30S ribosomal subunit. Interacts with proteins S7 and S18. Binds to IF-3.

Located on the platform of the 30S subunit, it bridges several disparate RNA helices of the 16S rRNA. Forms part of the Shine-Dalgarno cleft in the 70S ribosome. This chain is Small ribosomal subunit protein uS11, found in Prosthecochloris aestuarii (strain DSM 271 / SK 413).